The primary structure comprises 311 residues: Ribonuclease Z (311 aa).

Positions 61, 63, 65, 66, 148, 216, and 275 each coordinate Zn(2+). Asp65 functions as the Proton acceptor in the catalytic mechanism.

It belongs to the RNase Z family. Homodimer. Zn(2+) is required as a cofactor.

The enzyme catalyses Endonucleolytic cleavage of RNA, removing extra 3' nucleotides from tRNA precursor, generating 3' termini of tRNAs. A 3'-hydroxy group is left at the tRNA terminus and a 5'-phosphoryl group is left at the trailer molecule.. Zinc phosphodiesterase, which displays some tRNA 3'-processing endonuclease activity. Probably involved in tRNA maturation, by removing a 3'-trailer from precursor tRNA. In Clostridium novyi (strain NT), this protein is Ribonuclease Z.